We begin with the raw amino-acid sequence, 3410 residues long: Genome polyprotein (3410 aa).

The Cytoplasmic segment spans residues 1–103 (MTKKPGRPGR…DFVHLPKKKS (103 aa)). An interaction with host EXOC1 region spans residues 2-15 (TKKPGRPGRNRAVN). Residues 38–73 (LLDGRGPLRMVLAILAFFRFTALKPTAGLLKRWGMM) are hydrophobic; homodimerization of capsid protein C. The propeptide at 103 to 119 (SGVSIIGRMLVFSFTAA) is ER anchor for the capsid protein C, removed in mature form by serine protease NS3. The chain crosses the membrane as a helical span at residues 104-124 (GVSIIGRMLVFSFTAAVRVTL). The Extracellular portion of the chain corresponds to 125–245 (ENGMSLMKIQ…ATSYLTKAES (121 aa)). The helical transmembrane segment at 246-266 (WALRNPGYALVAAVLGWSLGT) threads the bilayer. At 267 to 271 (SNAQK) the chain is on the cytoplasmic side. The helical transmembrane segment at 272–286 (VIFTVMILLIAPAYS) threads the bilayer. The Extracellular portion of the chain corresponds to 287-739 (IRCVGVENRD…QIFGGMFRTL (453 aa)). Intrachain disulfides connect Cys289/Cys316, Cys346/Cys402, Cys346/Cys407, Cys360/Cys391, Cys378/Cys402, and Cys378/Cys407. The interval 384 to 397 (DRGWGNGCGLFGKG) is fusion peptide. Asn440 is a glycosylation site (N-linked (GlcNAc...) asparagine; by host). 2 disulfide bridges follow: Cys476/Cys574 and Cys591/Cys622. A helical transmembrane segment spans residues 740 to 760 (FGGMSWFTQIMIGALCCWLGI). The Cytoplasmic segment spans residues 761 to 766 (NARDRT). The helical transmembrane segment at 767–787 (IAVTFLAVGGVLVFLATSVNA) threads the bilayer. The Extracellular segment spans residues 788-1165 (DSGCALDLKR…IALQEVMRKR (378 aa)). Cystine bridges form between Cys791–Cys802, Cys842–Cys928, Cys964–Cys1009, Cys1066–Cys1115, Cys1077–Cys1098, Cys1077–Cys1099, Cys1098–Cys1102, and Cys1099–Cys1102. Asn915 is a glycosylation site (N-linked (GlcNAc...) asparagine; by host). A helical transmembrane segment spans residues 1166-1186 (ILGRHITWMVIAVFMAMILGG). The Cytoplasmic portion of the chain corresponds to 1187-1214 (LSYRDLGRYLVLVGAAFAERNSGGDLLH). A helical membrane pass occupies residues 1215-1235 (LVLVATFKVKPMALLGFVLGG). Topologically, residues 1236-1242 (RWCRRQS) are lumenal. The helical transmembrane segment at 1243–1263 (LLLSIGAVLVNFALEFQGGYF) threads the bilayer. Over 1264-1284 (ELVDSLALALLFVKAVVQTDT) the chain is Cytoplasmic. A helical membrane pass occupies residues 1285 to 1305 (TSVSLPLLAALAPAGCYTVLG). Residues 1306–1335 (THRFIMLTLVLVTFLGCKKTASVKKAGTAA) are Lumenal-facing. A helical transmembrane segment spans residues 1336–1356 (VGVVLGMVGMKTIPMLGMLMV). Residues 1357 to 1363 (TSRARRS) lie on the Cytoplasmic side of the membrane. Residues 1364 to 1384 (WPLHEAMAAVGILCALFGALA) traverse the membrane as a helical segment. Residues 1385 to 1387 (ETE) are Lumenal-facing. The chain crosses the membrane as a helical span at residues 1388–1408 (VDLAGPLAAAGLIVMAYVISG). Topologically, residues 1409-1464 (RSNDLSIKKVEDVKWSDEAEVTGESVSYHVSLDVRGDPTLTEDSGPGLEKVLLKVG) are cytoplasmic. Residues 1415–1454 (IKKVEDVKWSDEAEVTGESVSYHVSLDVRGDPTLTEDSGP) are interacts with and activates NS3 protease. Positions 1465-1485 (LMAISGIYPVAIPFALGAWFF) form an intramembrane region, helical. Topologically, residues 1486–2158 (LEKRCKRAGA…KAALENSPEM (673 aa)) are cytoplasmic. Residues 1493-1670 (AGALWDIPSP…ENVGQEDGAE (178 aa)) form the Peptidase S7 domain. Catalysis depends on charge relay system; for serine protease NS3 activity residues His1543, Asp1567, and Ser1627. Positions 1673-1829 (DNWFRKRELT…PSNSPIIDEE (157 aa)) constitute a Helicase ATP-binding domain. Residues 1677–1680 (RKRE) form an important for RNA-binding region. 1686–1693 (LHPGAGKT) contacts ATP. Residues 1777–1780 (DEAH) carry the DEAH box motif. Residues 1839 to 2006 (SGYEWIIEFD…QLYTPEREKT (168 aa)) form the Helicase C-terminal domain. Lys1881 bears the N6-acetyllysine; by host mark. Residues 2153–2157 (ENSPE) are regulates the ATPase activity of NS3 helicase. A helical membrane pass occupies residues 2159 to 2179 (IETFLLCALVCLMTIGLVVVL). The Lumenal segment spans residues 2180-2185 (VRGKGP). An intramembrane region (helical) is located at residues 2186–2205 (GKLAFGMVSIGVMTWLLWSA). Position 2206 (Gly2206) is a topological domain, lumenal. A helical transmembrane segment spans residues 2207–2227 (VDPGKIAAAVILVFLLLVVLI). The Cytoplasmic portion of the chain corresponds to 2228 to 2242 (PEPEKQRSVQDNQLA). Residues 2243–2257 (MLMLLIATILGGVAA) traverse the membrane as a helical segment. The Lumenal portion of the chain corresponds to 2258 to 2293 (NEMGWLEKTKADLSWVVRGRSSTTTPVVELDMKPAT). Positions 2294-2314 (AWTLYALATTLLTPLFQHLIV) form an intramembrane region, helical. Topologically, residues 2315-2336 (TKYANISLMAIASQAGTLFSMD) are lumenal. Residues 2337-2357 (SGIPFSSIELSVPLLALGCWT) traverse the membrane as a helical segment. Gln2358 is a topological domain (cytoplasmic). The chain crosses the membrane as a helical span at residues 2359–2379 (ITPCSLILACVLLSTHYAILL). At 2380-2420 (PGMQAQAARDAQRRTAAGIMKNAVVDGIVATDIPPLDGAGP) the chain is on the lumenal side. The helical transmembrane segment at 2421–2441 (LTEKKLGQLLLFAAAVTGVVI) threads the bilayer. Residues 2442-3410 (TRSPRSWSEL…EKRVEFRGVL (969 aa)) are Cytoplasmic-facing. One can recognise an mRNA cap 0-1 NS5-type MT domain in the interval 2508 to 2773 (GGGIGETLGE…DVNLSCGTRA (266 aa)). Ser2563 lines the S-adenosyl-L-methionine pocket. A Phosphoserine modification is found at Ser2563. Lys2568 serves as the catalytic For 2'-O-MTase activity. Residues Gly2593, Trp2594, Thr2611, Lys2612, Asp2638, and Val2639 each contribute to the S-adenosyl-L-methionine site. Residue Asp2653 is the For 2'-O-MTase activity of the active site. S-adenosyl-L-methionine is bound at residue Ile2654. Catalysis depends on for 2'-O-MTase activity residues Lys2690 and Glu2726. Position 2728 (Tyr2728) interacts with S-adenosyl-L-methionine. Zn(2+) contacts are provided by Glu2947, His2951, Cys2956, and Cys2959. Residues 3036–3187 (GILYADDTAG…AAPDARFGAA (152 aa)) enclose the RdRp catalytic domain. Positions 3222, 3238, and 3356 each coordinate Zn(2+).

It in the N-terminal section; belongs to the class I-like SAM-binding methyltransferase superfamily. mRNA cap 0-1 NS5-type methyltransferase family. Homodimer. Interacts (via N-terminus) with host EXOC1 (via C-terminus); this interaction results in EXOC1 degradation through the proteasome degradation pathway. In terms of assembly, forms heterodimers with envelope protein E in the endoplasmic reticulum and Golgi. As to quaternary structure, homodimer; in the endoplasmic reticulum and Golgi. Interacts with protein prM. Interacts with non-structural protein 1. Homodimer; Homohexamer when secreted. Interacts with envelope protein E. NS1 interacts with NS4B. Interacts with host complement protein CFH; this interaction leads to the degradation of C3. In terms of assembly, interacts (via N-terminus) with serine protease NS3. As to quaternary structure, forms a heterodimer with serine protease NS3. May form homooligomers. Forms a heterodimer with NS2B. Interacts with non-structural protein 2A (via N-terminus). Interacts with NS4B. Interacts with unphosphorylated RNA-directed RNA polymerase NS5; this interaction stimulates RNA-directed RNA polymerase NS5 guanylyltransferase activity. In terms of assembly, interacts with serine protease NS3. As to quaternary structure, homodimer. Interacts with host STAT2; this interaction inhibits the phosphorylation of the latter, and, when all viral proteins are present (polyprotein), targets STAT2 for degradation. In terms of processing, specific enzymatic cleavages in vivo yield mature proteins. Cleavages in the lumen of endoplasmic reticulum are performed by host signal peptidase, whereas cleavages in the cytoplasmic side are performed by serine protease NS3. Signal cleavage at the 2K-4B site requires a prior NS3 protease-mediated cleavage at the 4A-2K site. Cleaved in post-Golgi vesicles by a host furin, releasing the mature small envelope protein M, and peptide pr. This cleavage is incomplete as up to 30% of viral particles still carry uncleaved prM. Post-translationally, N-glycosylated. In terms of processing, N-glycosylated. The excreted form is glycosylated and this is required for efficient secretion of the protein from infected cells. Acetylated by host KAT5. Acetylation modulates NS3 RNA-binding and unwinding activities and plays an important positive role for viral replication. Post-translationally, phosphorylated on serines residues. This phosphorylation may trigger NS5 nuclear localization.

The protein resides in the virion. The protein localises to the host nucleus. It is found in the host cytoplasm. Its subcellular location is the host perinuclear region. It localises to the secreted. The protein resides in the virion membrane. The protein localises to the host endoplasmic reticulum membrane. The enzyme catalyses Selective hydrolysis of -Xaa-Xaa-|-Yaa- bonds in which each of the Xaa can be either Arg or Lys and Yaa can be either Ser or Ala.. It catalyses the reaction RNA(n) + a ribonucleoside 5'-triphosphate = RNA(n+1) + diphosphate. It carries out the reaction a ribonucleoside 5'-triphosphate + H2O = a ribonucleoside 5'-diphosphate + phosphate + H(+). The catalysed reaction is ATP + H2O = ADP + phosphate + H(+). The enzyme catalyses a 5'-end (5'-triphosphoguanosine)-ribonucleoside in mRNA + S-adenosyl-L-methionine = a 5'-end (N(7)-methyl 5'-triphosphoguanosine)-ribonucleoside in mRNA + S-adenosyl-L-homocysteine. It catalyses the reaction a 5'-end (N(7)-methyl 5'-triphosphoguanosine)-ribonucleoside in mRNA + S-adenosyl-L-methionine = a 5'-end (N(7)-methyl 5'-triphosphoguanosine)-(2'-O-methyl-ribonucleoside) in mRNA + S-adenosyl-L-homocysteine + H(+). Functionally, plays a role in virus budding by binding to the cell membrane and gathering the viral RNA into a nucleocapsid that forms the core of a mature virus particle. During virus entry, may induce genome penetration into the host cytoplasm after hemifusion induced by the surface proteins. Can migrate to the cell nucleus where it modulates host functions. Overcomes the anti-viral effects of host EXOC1 by sequestering and degrading the latter through the proteasome degradation pathway. In terms of biological role, inhibits RNA silencing by interfering with host Dicer. Prevents premature fusion activity of envelope proteins in trans-Golgi by binding to envelope protein E at pH6.0. After virion release in extracellular space, gets dissociated from E dimers. Its function is as follows. Acts as a chaperone for envelope protein E during intracellular virion assembly by masking and inactivating envelope protein E fusion peptide. prM is the only viral peptide matured by host furin in the trans-Golgi network probably to avoid catastrophic activation of the viral fusion activity in acidic Golgi compartment prior to virion release. prM-E cleavage is inefficient, and many virions are only partially matured. These uncleaved prM would play a role in immune evasion. Functionally, may play a role in virus budding. Exerts cytotoxic effects by activating a mitochondrial apoptotic pathway through M ectodomain. May display a viroporin activity. In terms of biological role, binds to host cell surface receptor and mediates fusion between viral and cellular membranes. Envelope protein is synthesized in the endoplasmic reticulum in the form of heterodimer with protein prM. They play a role in virion budding in the ER, and the newly formed immature particle is covered with 60 spikes composed of heterodimer between precursor prM and envelope protein E. The virion is transported to the Golgi apparatus where the low pH causes dissociation of PrM-E heterodimers and formation of E homodimers. prM-E cleavage is inefficient, and many virions are only partially matured. These uncleaved prM would play a role in immune evasion. Involved in immune evasion, pathogenesis and viral replication. Once cleaved off the polyprotein, is targeted to three destinations: the viral replication cycle, the plasma membrane and the extracellular compartment. Essential for viral replication. Required for formation of the replication complex and recruitment of other non-structural proteins to the ER-derived membrane structures. Excreted as a hexameric lipoparticle that plays a role against host immune response. Antagonizing the complement function. Binds to the host macrophages and dendritic cells. Inhibits signal transduction originating from Toll-like receptor 3 (TLR3). Its function is as follows. Component of the viral RNA replication complex that functions in virion assembly and antagonizes the host alpha/beta interferon antiviral response. Functionally, required cofactor for the serine protease function of NS3. May have membrane-destabilizing activity and form viroporins. In terms of biological role, displays three enzymatic activities: serine protease, NTPase and RNA helicase. NS3 serine protease, in association with NS2B, performs its autocleavage and cleaves the polyprotein at dibasic sites in the cytoplasm: C-prM, NS2A-NS2B, NS2B-NS3, NS3-NS4A, NS4A-2K and NS4B-NS5. NS3 RNA helicase binds RNA and unwinds dsRNA in the 3' to 5' direction. Regulates the ATPase activity of the NS3 helicase activity. NS4A allows NS3 helicase to conserve energy during unwinding. Its function is as follows. Functions as a signal peptide for NS4B and is required for the interferon antagonism activity of the latter. Functionally, induces the formation of ER-derived membrane vesicles where the viral replication takes place. Inhibits interferon (IFN)-induced host STAT1 phosphorylation and nuclear translocation, thereby preventing the establishment of cellular antiviral state by blocking the IFN-alpha/beta pathway. Inhibits STAT2 translocation in the nucleus after IFN-alpha treatment. In terms of biological role, replicates the viral (+) and (-) RNA genome, and performs the capping of genomes in the cytoplasm. NS5 methylates viral RNA cap at guanine N-7 and ribose 2'-O positions. Besides its role in RNA genome replication, also prevents the establishment of cellular antiviral state by blocking the interferon-alpha/beta (IFN-alpha/beta) signaling pathway. Inhibits host TYK2 and STAT2 phosphorylation, thereby preventing activation of JAK-STAT signaling pathway. This chain is Genome polyprotein, found in Kokobera virus (KOKV).